The following is a 239-amino-acid chain: Large ribosomal subunit protein uL1 (239 aa).

It belongs to the universal ribosomal protein uL1 family. In terms of assembly, part of the 50S ribosomal subunit.

Binds directly to 23S rRNA. The L1 stalk is quite mobile in the ribosome, and is involved in E site tRNA release. Its function is as follows. Protein L1 is also a translational repressor protein, it controls the translation of the L11 operon by binding to its mRNA. The chain is Large ribosomal subunit protein uL1 from Mycolicibacterium gilvum (strain PYR-GCK) (Mycobacterium gilvum (strain PYR-GCK)).